A 230-amino-acid polypeptide reads, in one-letter code: UPF0173 metal-dependent hydrolase Sca_1312 (230 aa).

It belongs to the UPF0173 family.

This chain is UPF0173 metal-dependent hydrolase Sca_1312, found in Staphylococcus carnosus (strain TM300).